A 353-amino-acid polypeptide reads, in one-letter code: Beta-hexosaminidase (353 aa).

Substrate-binding positions include Asp-74, Arg-82, Arg-149, and 179–180 (KH). The Proton donor/acceptor role is filled by His-192. The Nucleophile role is filled by Asp-263.

The protein belongs to the glycosyl hydrolase 3 family. NagZ subfamily.

Its subcellular location is the cytoplasm. The enzyme catalyses Hydrolysis of terminal non-reducing N-acetyl-D-hexosamine residues in N-acetyl-beta-D-hexosaminides.. It functions in the pathway cell wall biogenesis; peptidoglycan recycling. Plays a role in peptidoglycan recycling by cleaving the terminal beta-1,4-linked N-acetylglucosamine (GlcNAc) from peptide-linked peptidoglycan fragments, giving rise to free GlcNAc, anhydro-N-acetylmuramic acid and anhydro-N-acetylmuramic acid-linked peptides. This chain is Beta-hexosaminidase, found in Bordetella bronchiseptica (strain ATCC BAA-588 / NCTC 13252 / RB50) (Alcaligenes bronchisepticus).